The sequence spans 121 residues: Holin-like protein CidA 1 (121 aa).

Helical transmembrane passes span 7–24 (SGQI…EWIA), 28–50 (HLPV…FNLV), 62–81 (LLKE…IRYR), and 91–113 (LILI…TELL).

Belongs to the CidA/LrgA family. CidA subfamily.

The protein localises to the cell membrane. Increases the activity of extracellular murein hydrolases possibly by mediating their export via hole formation. Inhibited by the antiholin-like proteins LrgAB. In an unstressed cell, the LrgAB products probably inhibit the function of the CidA protein. When a cell is stressed by the addition of antibiotics or by other factors in the environment, CidA possibly oligomerizes within the bacterial cell membrane, creating lesions that disrupt the proton motive force, which in turn results in loss of cell viability. These lesions are also hypothesized to regulate the subsequent cell lysis by either allowing the murein hydrolases access to the cell wall substrate and/or regulating their activity by a possible change in the cell wall pH that results from loss of membrane potential. The chain is Holin-like protein CidA 1 (cidA1) from Bacillus cereus (strain ATCC 14579 / DSM 31 / CCUG 7414 / JCM 2152 / NBRC 15305 / NCIMB 9373 / NCTC 2599 / NRRL B-3711).